The following is a 276-amino-acid chain: Putative non-heme chloroperoxidase (276 aa).

Positions proline 26 to histidine 263 constitute an AB hydrolase-1 domain. Residues serine 99, aspartate 228, and histidine 257 contribute to the active site.

Belongs to the AB hydrolase superfamily. Bacterial non-heme haloperoxidase / perhydrolase family.

This is Putative non-heme chloroperoxidase from Synechocystis sp. (strain ATCC 27184 / PCC 6803 / Kazusa).